Here is a 1699-residue protein sequence, read N- to C-terminus: Hybrid signal transduction histidine kinase E (1699 aa).

Disordered stretches follow at residues 1–32 (MDKL…NLEN) and 58–97 (NNII…NPNV). Residues 7–32 (NNNLSPPSSPSSSTTTPNLSSTNLEN) are compositionally biased toward low complexity. Transmembrane regions (helical) follow at residues 142 to 162 (CILL…LIFL), 164 to 184 (SFYP…IVST), 191 to 211 (LVAL…FLQI), 238 to 258 (LNFL…IFFP), 262 to 282 (FSIT…LISI), and 295 to 315 (NLIV…ILSI). Over residues 412–432 (ITNGGNNKQTSTTSANSTPRY) the composition is skewed to polar residues. Disordered regions lie at residues 412–439 (ITNG…NNNN) and 542–593 (LLNN…NISN). Positions 544–593 (NNNNNNNNNNNNNNNNNNNNNNNNNNSNNNNNNNSNNNNNNNNINNNISN) are enriched in low complexity. Residues 678–950 (TVSHEVRTPI…AFSFTSILST (273 aa)) enclose the Histidine kinase domain. Phosphohistidine; by autocatalysis is present on His681. Disordered stretches follow at residues 819–866 (NNNN…NNNN), 1018–1054 (NNNN…NDNN), 1186–1239 (KKQQ…RKSS), 1252–1294 (MVQV…NPNN), and 1351–1406 (SIPI…SPPP). Over residues 1198–1212 (MGDTLSSTKSPQYTN) the composition is skewed to polar residues. Positions 1219–1239 (SSSSNGSLNKSNRSNLLRKSS) are enriched in low complexity. The segment covering 1271–1282 (KGNNSNPNSTEL) has biased composition (polar residues). Composition is skewed to low complexity over residues 1283–1294 (NSTNSVNGNPNN) and 1355–1392 (NINN…NNNN). The 121-residue stretch at 1575–1695 (NALIVDDTEL…TLKDTLLKWG (121 aa)) folds into the Response regulatory domain. 4-aspartylphosphate is present on Asp1625.

It localises to the membrane. It carries out the reaction ATP + protein L-histidine = ADP + protein N-phospho-L-histidine.. May act in a signal transduction pathway. This protein undergoes an ATP-dependent autophosphorylation at a conserved histidine residue in the kinase core, and a phosphoryl group is then transferred to a conserved aspartate residue in the receiver domain. The sequence is that of Hybrid signal transduction histidine kinase E (dhkE) from Dictyostelium discoideum (Social amoeba).